The primary structure comprises 1555 residues: Probable serine/threonine-protein kinase DDB_G0276181 (1555 aa).

Disordered regions lie at residues 1 to 54 (MTSV…NNSF), 138 to 208 (IIQQ…NSKL), 342 to 452 (KLKK…DSPF), 486 to 508 (TTTT…IKPL), and 781 to 850 (NNIN…NQNT). Composition is skewed to low complexity over residues 14–53 (NNSG…NNNS), 138–205 (IIQQ…NNNN), 359–378 (SNIA…KING), and 395–431 (NNSQ…SKKP). A PH domain is found at 58–238 (QVLHTGYLTK…WIEMIKLAIS (181 aa)). Residues 437–452 (RNISTSDNGSGTDSPF) show a composition bias toward polar residues. 2 stretches are compositionally biased toward low complexity: residues 486-504 (TTTT…TNTN) and 781-832 (NNIN…NNNN). Over residues 833 to 850 (GSGLLSSSPLITISNQNT) the composition is skewed to polar residues. Residues 986 to 1309 (VVLHERLGTG…TIIHSISKMI (324 aa)) enclose the Protein kinase domain. 992–1000 (LGTGATGDI) provides a ligand contact to ATP. A disordered region spans residues 1012–1031 (RHISNQDSSGSNSSGSGSGH). Position 1061 (Lys-1061) interacts with ATP. Asp-1156 (proton acceptor) is an active-site residue. Positions 1340–1376 (VQNNNNNSNNNNNNNNNNNNNNSNSNLNNCNNSSPNL) are enriched in low complexity. Disordered stretches follow at residues 1340-1383 (VQNN…SANN) and 1457-1480 (KKSS…GSSR).

Belongs to the protein kinase superfamily. TKL Ser/Thr protein kinase family.

It carries out the reaction L-seryl-[protein] + ATP = O-phospho-L-seryl-[protein] + ADP + H(+). It catalyses the reaction L-threonyl-[protein] + ATP = O-phospho-L-threonyl-[protein] + ADP + H(+). The polypeptide is Probable serine/threonine-protein kinase DDB_G0276181 (Dictyostelium discoideum (Social amoeba)).